A 335-amino-acid chain; its full sequence is Beta-1,4-mannooligosaccharide phosphorylase (335 aa).

It belongs to the glycosyl hydrolase 130 family. In terms of assembly, homohexamer in solution.

It catalyses the reaction [(1-&gt;4)-beta-D-mannosyl](n) + phosphate = [(1-&gt;4)-beta-D-mannosyl](n-1) + alpha-D-mannose 1-phosphate. Functionally, catalyzes the phosphorolysis of beta-1,4-mannooligosaccharides to mannose 1-phosphate (Man1P) and shorter mannooligosaccharides. Can also catalyze the phosphorolysis of 4-O-beta-D-mannopyranosyl-D-glucopyranose (Man-Glc), but shows higher activity toward longer mannooligosaccharides. Involved in a mannan catabolic pathway which feeds into glycolysis. In Ruminococcus albus (strain ATCC 27210 / DSM 20455 / JCM 14654 / NCDO 2250 / 7), this protein is Beta-1,4-mannooligosaccharide phosphorylase.